Consider the following 51-residue polypeptide: Sperm protamine P1 (51 aa).

Belongs to the protamine P1 family. In terms of tissue distribution, testis.

The protein localises to the nucleus. It is found in the chromosome. In terms of biological role, protamines substitute for histones in the chromatin of sperm during the haploid phase of spermatogenesis. They compact sperm DNA into a highly condensed, stable and inactive complex. The chain is Sperm protamine P1 (PRM1) from Trachypithecus cristatus (Silvered leaf-monkey).